A 2839-amino-acid polypeptide reads, in one-letter code: Bifunctional DNA-directed RNA polymerase subunit beta-beta' (2839 aa).

Positions 1-1433 are DNA-directed RNA polymerase subunit beta; it reads MVDSSYMCAS…CLNVALKQNN (1433 aa). The DNA-directed RNA polymerase subunit beta' stretch occupies residues 1436-2839; it reads IEDISHTNIA…KESVAESRYN (1404 aa). Zn(2+) is bound by residues Cys-1501, Cys-1503, Cys-1516, and Cys-1519. Residues Asp-1893, Asp-1895, and Asp-1897 each coordinate Mg(2+). Residues Cys-2238, Cys-2312, Cys-2319, and Cys-2322 each contribute to the Zn(2+) site.

It in the N-terminal section; belongs to the RNA polymerase beta chain family. In the C-terminal section; belongs to the RNA polymerase beta' chain family. The RNAP catalytic core consists of 2 alpha, 1 beta/beta' and 1 omega subunit. When a sigma factor is associated with the core the holoenzyme is formed, which can initiate transcription. Mg(2+) is required as a cofactor. It depends on Zn(2+) as a cofactor.

The catalysed reaction is RNA(n) + a ribonucleoside 5'-triphosphate = RNA(n+1) + diphosphate. DNA-dependent RNA polymerase catalyzes the transcription of DNA into RNA using the four ribonucleoside triphosphates as substrates. This Wolbachia sp. subsp. Brugia malayi (strain TRS) protein is Bifunctional DNA-directed RNA polymerase subunit beta-beta' (rpoBC).